A 361-amino-acid polypeptide reads, in one-letter code: Peptide chain release factor 1 (361 aa).

Glutamine 235 is modified (N5-methylglutamine).

It belongs to the prokaryotic/mitochondrial release factor family. Post-translationally, methylated by PrmC. Methylation increases the termination efficiency of RF1.

The protein resides in the cytoplasm. Functionally, peptide chain release factor 1 directs the termination of translation in response to the peptide chain termination codons UAG and UAA. The sequence is that of Peptide chain release factor 1 from Xanthomonas campestris pv. campestris (strain 8004).